Reading from the N-terminus, the 511-residue chain is Cytochrome P450 4A7 (511 aa).

A propeptide spanning residues 1-4 (MSVS) is cleaved from the precursor. Residues glutamate 322 and cysteine 458 each contribute to the heme site.

The protein belongs to the cytochrome P450 family. Heme serves as cofactor. In terms of tissue distribution, liver, kidney, small intestine.

Its subcellular location is the endoplasmic reticulum membrane. It localises to the microsome membrane. The enzyme catalyses an omega-methyl-long-chain fatty acid + reduced [NADPH--hemoprotein reductase] + O2 = an omega-hydroxy-long-chain fatty acid + oxidized [NADPH--hemoprotein reductase] + H2O + H(+). In terms of biological role, cytochromes P450 are a group of heme-thiolate monooxygenases. In liver microsomes, this enzyme is involved in an NADPH-dependent electron transport pathway. It oxidizes a variety of structurally unrelated compounds, including steroids, fatty acids, and xenobiotics. The kidney P-450 system is rather specialized for the omega-hydroxylation of fatty acids. Both P450-KA1 and P450-KA2 catalyze the omega- and (omega-1)-hydroxylation of various fatty acids with no drug-metabolizing activity, and hydroxylate prostaglandin A1 and A2 solely at the omega-position. The polypeptide is Cytochrome P450 4A7 (CYP4A7) (Oryctolagus cuniculus (Rabbit)).